Consider the following 371-residue polypeptide: Meiotic drive suppressor wtf18 (371 aa).

8 helical membrane-spanning segments follow: residues 86 to 106 (FLLRLLISVLAVSVVFFTAWV), 120 to 140 (AFSVTIGITCPILFIATFCFF), 153 to 173 (VTVIFLAQCVKVTVIFLAQCV), 197 to 217 (DLVVTIWLAWVVICFILFGCV), 233 to 253 (CSISAALFFILLLVCIPIWTL), 257 to 277 (LFGLFQVLGVQSCVVIVTKGL), 287 to 307 (ATGYEIEASSLFVIGNFLFFY), and 321 to 341 (FIGNGIASFLGGLGNAFGGIG).

The protein belongs to the WTF family. In terms of assembly, homomer. Interacts with other proteins that exhibit high sequence similarity.

Its subcellular location is the spore membrane. The protein resides in the vacuole membrane. Its function is as follows. Acts as a suppressor component of the dual wtf meiotic drive system, and can suppress but not confer meiotic drive by compatible poisons. Wtf meiotic drive systems promote unequal transmission of alleles from the parental zygote to progeny spores by encoding a poison and an antidote from the same locus; the poison is trans-acting and forms toxic aggregates in all spores within an ascus, wherease the antidote is spore-specific and targets aggregates for degradation by the vacuole. Meiotic drive by wtf systems therefore lead to poisoning of all progeny that do not inherit the dual poison/antidote allele, or express a compatible antidote. This Schizosaccharomyces kambucha (Fission yeast) protein is Meiotic drive suppressor wtf18.